The primary structure comprises 1377 residues: Dicer-like protein 2 (1377 aa).

One can recognise a Helicase ATP-binding domain in the interval 23–203 (MFEASLKENI…MKTLESNLDS (181 aa)). Residue 36–43 (MDTGTGKT) participates in ATP binding. The DEAH box signature appears at 144-147 (DEAH). Residues 368-531 (ALINFLDKFD…AYQDEERRLR (164 aa)) enclose the Helicase C-terminal domain. The Dicer dsRNA-binding fold domain occupies 561–655 (VVTHLYHFCA…LPLTKNPEMR (95 aa)). RNase III domains are found at residues 914–1052 (RLCA…LDGG) and 1092–1275 (DGDL…VDSG). Glutamate 1131, aspartate 1261, and glutamate 1264 together coordinate Mg(2+).

Belongs to the helicase family. Dicer subfamily. Mg(2+) is required as a cofactor. The cofactor is Mn(2+).

Functionally, dicer-like endonuclease involved in cleaving double-stranded RNA in the RNA interference (RNAi) pathway. Produces 21 to 25 bp dsRNAs (siRNAs) which target the selective destruction of homologous RNAs leading to sequence-specific suppression of gene expression, called post-transcriptional gene silencing (PTGS). Part of a broad host defense response against viral infection and transposons. This is Dicer-like protein 2 (dcl2) from Aspergillus oryzae (strain ATCC 42149 / RIB 40) (Yellow koji mold).